The primary structure comprises 206 residues: Thiamine-phosphate synthase (206 aa).

4-amino-2-methyl-5-(diphosphooxymethyl)pyrimidine contacts are provided by residues 38–42 and asparagine 70; that span reads QLRAK. Mg(2+)-binding residues include aspartate 71 and aspartate 90. Serine 107 contributes to the 4-amino-2-methyl-5-(diphosphooxymethyl)pyrimidine binding site. 133–135 is a 2-[(2R,5Z)-2-carboxy-4-methylthiazol-5(2H)-ylidene]ethyl phosphate binding site; sequence TTT. Position 136 (lysine 136) interacts with 4-amino-2-methyl-5-(diphosphooxymethyl)pyrimidine. 2-[(2R,5Z)-2-carboxy-4-methylthiazol-5(2H)-ylidene]ethyl phosphate-binding positions include glycine 164 and 184–185; that span reads VS.

Belongs to the thiamine-phosphate synthase family. It depends on Mg(2+) as a cofactor.

It catalyses the reaction 2-[(2R,5Z)-2-carboxy-4-methylthiazol-5(2H)-ylidene]ethyl phosphate + 4-amino-2-methyl-5-(diphosphooxymethyl)pyrimidine + 2 H(+) = thiamine phosphate + CO2 + diphosphate. The enzyme catalyses 2-(2-carboxy-4-methylthiazol-5-yl)ethyl phosphate + 4-amino-2-methyl-5-(diphosphooxymethyl)pyrimidine + 2 H(+) = thiamine phosphate + CO2 + diphosphate. It carries out the reaction 4-methyl-5-(2-phosphooxyethyl)-thiazole + 4-amino-2-methyl-5-(diphosphooxymethyl)pyrimidine + H(+) = thiamine phosphate + diphosphate. Its pathway is cofactor biosynthesis; thiamine diphosphate biosynthesis; thiamine phosphate from 4-amino-2-methyl-5-diphosphomethylpyrimidine and 4-methyl-5-(2-phosphoethyl)-thiazole: step 1/1. Its function is as follows. Condenses 4-methyl-5-(beta-hydroxyethyl)thiazole monophosphate (THZ-P) and 2-methyl-4-amino-5-hydroxymethyl pyrimidine pyrophosphate (HMP-PP) to form thiamine monophosphate (TMP). The polypeptide is Thiamine-phosphate synthase (Herpetosiphon aurantiacus (strain ATCC 23779 / DSM 785 / 114-95)).